A 440-amino-acid chain; its full sequence is 5-hydroxytryptamine receptor 6 (440 aa).

The Extracellular segment spans residues 1–27; that stretch reads MVPEPGPTANSTPAWGAGPPSAPGGSG. A helical transmembrane segment spans residues 28 to 52; that stretch reads WVAAALCVVIALTAAANSLLIALIC. The Cytoplasmic segment spans residues 53-62; sequence TQPALRNTSN. Residues 63–88 form a helical membrane-spanning segment; sequence FFLVSLFTSDLMVGLVVMPPAMLNAL. Residues 89 to 96 lie on the Extracellular side of the membrane; the sequence is YGRWVLAR. A helical membrane pass occupies residues 97 to 122; that stretch reads GLCLLWTAFDVMCCSASILNLCLISL. C99 and C180 are disulfide-bonded. D106 contributes to the serotonin binding site. Topologically, residues 123–142 are cytoplasmic; the sequence is DRYLLILSPLRYKLRMTPLR. A helical membrane pass occupies residues 143–167; it reads ALALVLGAWSLAALASFLPLLLGWH. At 168–185 the chain is on the extracellular side; the sequence is ELGHARPPVPGQCRLLAS. The chain crosses the membrane as a helical span at residues 186 to 209; that stretch reads LPFVLVASGLTFFLPSGAICFTYC. At 210 to 266 the chain is on the cytoplasmic side; it reads RILLAARKQAVQVASLTTGMASQASETLQVPRTPRPGVESADSRRLATKHSRKALKA. Residues 267-293 form a helical membrane-spanning segment; that stretch reads SLTLGILLGMFFVTWLPFFVANIVQAV. N288 contributes to the serotonin binding site. Residues 294 to 299 lie on the Extracellular side of the membrane; that stretch reads CDCISP. Residues 300–323 form a helical membrane-spanning segment; sequence GLFDVLTWLGYCNSTMNPIIYPLF. At 324–440 the chain is on the cytoplasmic side; it reads MRDFKRALGR…RPHPLGIPTN (117 aa). Residues 346–392 form a disordered region; it reads ASLASPSLRTSHSGPRPGLSLQQVLPLPLPPDSDSDSDAGSGGSSGL. The segment covering 347–358 has biased composition (polar residues); that stretch reads SLASPSLRTSHS. Residues 362 to 371 are compositionally biased toward low complexity; it reads PGLSLQQVLP.

It belongs to the G-protein coupled receptor 1 family. As to quaternary structure, interacts with MTOR, RPTOR and NF1. Interacts with CDK5. As to expression, expressed in several human brain regions, most prominently in the caudate nucleus.

It is found in the cell membrane. In terms of biological role, G-protein coupled receptor for 5-hydroxytryptamine (serotonin), a biogenic hormone that functions as a neurotransmitter, a hormone and a mitogen. Also has a high affinity for tricyclic psychotropic drugs. Ligand binding causes a conformation change that triggers signaling via guanine nucleotide-binding proteins (G proteins) and modulates the activity of downstream effectors. HTR6 is coupled to G(s) G alpha proteins and mediates activation of adenylate cyclase activity. Controls pyramidal neurons migration during corticogenesis, through the regulation of CDK5 activity. Is an activator of mTOR signaling. This chain is 5-hydroxytryptamine receptor 6, found in Homo sapiens (Human).